The chain runs to 215 residues: Cytochrome b6 (215 aa).

The chain crosses the membrane as a helical span at residues 32–52 (IFYCLGGITLTCFLVQVATGF). Cys35 lines the heme c pocket. The heme b site is built by His86 and His100. Helical transmembrane passes span 90–110 (ASMMVLMMILHVFRVYLTGGF), 116–136 (LTWVTGVVLGVLTASFGVTGY), and 186–206 (LHTFVLPLLTAVFMLMHFPMI). The heme b site is built by His187 and His202.

Belongs to the cytochrome b family. PetB subfamily. As to quaternary structure, the 4 large subunits of the cytochrome b6-f complex are cytochrome b6, subunit IV (17 kDa polypeptide, PetD), cytochrome f and the Rieske protein, while the 4 small subunits are PetG, PetL, PetM and PetN. The complex functions as a dimer. Requires heme b as cofactor. The cofactor is heme c.

It localises to the plastid. The protein localises to the chloroplast thylakoid membrane. Functionally, component of the cytochrome b6-f complex, which mediates electron transfer between photosystem II (PSII) and photosystem I (PSI), cyclic electron flow around PSI, and state transitions. In Lactuca sativa (Garden lettuce), this protein is Cytochrome b6.